Consider the following 671-residue polypeptide: Autophagy-related protein 22-2 (671 aa).

Composition is skewed to polar residues over residues 1–10 (MVPRNFSESQ) and 19–34 (PSNS…SSSF). The interval 1–67 (MVPRNFSESQ…RDVPAQYAGE (67 aa)) is disordered. Residues asparagine 5 and asparagine 21 are each glycosylated (N-linked (GlcNAc...) asparagine). Positions 39 to 60 (ERSSSADHDSMGPDIGSAHRDV) are enriched in basic and acidic residues. Helical transmembrane passes span 83–103 (YGFA…PITL), 155–175 (SFAM…VVSI), 188–208 (LLLF…TVVP), and 212–232 (LLGA…FVLL). Residues 251–271 (PDFSPEFRPSSVDESPPEHSL) are disordered. A helical membrane pass occupies residues 324–344 (IGIGYSAGLFLQCVSIVIIWL). Residue asparagine 346 is glycosylated (N-linked (GlcNAc...) asparagine). 7 helical membrane passes run 354–374 (LVLF…ALWL), 422–442 (FFLA…GTAV), 457–477 (GLIN…WAAI), 491–511 (ACIC…LPIV), 523–543 (WEMY…SSYC), 560–582 (YALY…GAIV), and 591–611 (AFWF…FVNV). A disordered region spans residues 634–671 (ESAGEGSRGSSIDHESGQNEGLIYPRVGENAGRGRNDI).

This sequence belongs to the ATG22 family.

The protein localises to the vacuole membrane. In terms of biological role, vacuolar effluxer which mediate the efflux of amino acids resulting from autophagic degradation. The release of autophagic amino acids allows the maintenance of protein synthesis and viability during nitrogen starvation. The polypeptide is Autophagy-related protein 22-2 (atg22-2) (Sclerotinia sclerotiorum (strain ATCC 18683 / 1980 / Ss-1) (White mold)).